The sequence spans 102 residues: Large ribosomal subunit protein bL28 (102 aa).

The interval 1-20 (MSRRCELTAKGPQVGHKVSH) is disordered.

It belongs to the bacterial ribosomal protein bL28 family.

The protein is Large ribosomal subunit protein bL28 of Bradyrhizobium sp. (strain BTAi1 / ATCC BAA-1182).